The primary structure comprises 580 residues: Arrestin domain-containing protein A (580 aa).

3 N-linked (GlcNAc...) asparagine glycosylation sites follow: N27, N33, and N60. Residues 31-54 are disordered; that stretch reads NVNTTSSHHHHHSNSGNAEVSFNG. 2 disordered regions span residues 67–86 and 95–114; these read ETHSGHHHHHSNGGNAEISI and MTMSVTDSNSGHHHHHHKES. Residues 118–138 traverse the membrane as a helical segment; sequence NLSLGGIVGAVVGAVTGGVMI. N-linked (GlcNAc...) asparagine glycans are attached at residues N149, N341, and N342. The segment at 468 to 528 adopts an FYVE-type zinc-finger fold; it reads DEHATACRKC…VCEECYPIAT (61 aa). Positions 474, 477, 490, 493, 498, 501, 520, and 523 each coordinate Zn(2+).

It belongs to the arrestin family.

Its subcellular location is the membrane. The chain is Arrestin domain-containing protein A (adcA) from Dictyostelium discoideum (Social amoeba).